Consider the following 410-residue polypeptide: Beta-arrestin-2 (410 aa).

Tyrosine 48 is modified (phosphotyrosine). Residues proline 176 and proline 181 each carry the hydroxyproline; by PHD2 modification. Residues 241–410 (ADICLFSTAQ…KDDDCDDQFC (170 aa)) are interaction with TRAF6. Serine 361 is modified (phosphoserine). The interaction with AP2B1 stretch occupies residues 378 to 410 (DTNYATDDDIVFEDFARLRLKGMKDDDCDDQFC). Phosphothreonine; by CaMK2 is present on threonine 383. The [DE]-X(1,2)-F-X-X-[FL]-X-X-X-R motif signature appears at 386 to 396 (DIVFEDFARLR).

The protein belongs to the arrestin family. In terms of assembly, homooligomer; the self-association is mediated by InsP6-binding. Heterooligomer with ARRB1; the association is mediated by InsP6-binding. Interacts with ADRB2 and CHRM2. Interacts with PDE4A. Interacts with PDE4D. Interacts with MAPK10, MAPK1 and MAPK3. Interacts with DRD2. Interacts with FSHR. Interacts with CLTC. Interacts with HTR2C. Interacts with CCR5. Interacts with CXCR4. Interacts with SRC. Interacts with DUSP16; the interaction is interrupted by stimulation of AGTR1 and activation of MAPK10. Interacts with CHUK; the interaction is enhanced stimulation of ADRB2. Interacts with RELA. Interacts with MDM2; the interaction is enhanced by activation of GPCRs. Interacts with SLC9A5. Interacts with TRAF6. Interacts with IGF1R. Interacts with ENG. Interacts with KIR2DL1, KIR2DL3 and KIR2DL4. Interacts with LDLR. Interacts with AP2B1. Interacts with C5AR1. Interacts with RAF1. Interacts with MAP2K1. Interacts with MAPK1. Interacts with MAPK10; the interaction enhances MAPK10 activation by MAP3K5. Interacts with MAP2K4; the interaction is enhanced by presence of MAP3K5 and MAPK10. Interacts with MAP3K5. Interacts with AKT1. Interacts with IKBKB and MAP3K14. Interacts with SMO (activated). Interacts with GSK3A and GSK3B. Associates with protein phosphatase 2A (PP2A). Interacts with CXCR4; the interaction is dependent on C-terminal phosphorylation of CXCR4 and allows activation of MAPK1 and MAPK3. Interacts with GPR143. Interacts with HCK and CXCR1 (phosphorylated). Interacts with ACKR3 and ACKR4. Interacts with ARRDC1; the interaction is direct. Interacts with GPR61, GPR62 and GPR135. Interacts (via NACHT and LRR domains) with NLRP3; this interaction is direct and inducible by omega-3 polyunsaturated fatty acids (PUFAs). Interacts with FFAR4 (via C-terminus); this interaction is stimulated by long-chain fatty acids (LCFAs). Interacts with GPR35. Interacts with GPR84. Interacts with TIGIT; this interaction inhibits the NF-kappa-B pathway. Interacts with TGFBR3. Phosphorylated at Thr-383 in the cytoplasm; probably dephosphorylated at the plasma membrane. The phosphorylation does not regulate internalization and recycling of ADRB2, interaction with clathrin or AP2B1. In terms of processing, the ubiquitination status appears to regulate the formation and trafficking of beta-arrestin-GPCR complexes and signaling. Ubiquitination appears to occur GPCR-specific. Ubiquitinated by MDM2; the ubiquitination is required for rapid internalization of ADRB2. Deubiquitinated by USP33; the deubiquitination leads to a dissociation of the beta-arrestin-GPCR complex. Stimulation of a class A GPCR, such as ADRB2, induces transient ubiquitination and subsequently promotes association with USP33. Stimulation of a class B GPCR promotes a sustained ubiquitination. Deubiquitinated by USP20; allowing USP20 to deubiquitinate TRAF6 leading to inhibition of NF-kappa-B signaling. Post-translationally, hydroxylation by PHD2 modulates the rate of internalization by slowing down recruitment to the plasma membrane and inhibiting subsequent co-internalization with class A receptors. In terms of tissue distribution, predominantly localized in neuronal tissues and in the spleen.

Its subcellular location is the cytoplasm. The protein resides in the nucleus. It localises to the cell membrane. The protein localises to the membrane. It is found in the clathrin-coated pit. Its subcellular location is the cytoplasmic vesicle. Functionally, functions in regulating agonist-mediated G-protein coupled receptor (GPCR) signaling by mediating both receptor desensitization and resensitization processes. During homologous desensitization, beta-arrestins bind to the GPRK-phosphorylated receptor and sterically preclude its coupling to the cognate G-protein; the binding appears to require additional receptor determinants exposed only in the active receptor conformation. The beta-arrestins target many receptors for internalization by acting as endocytic adapters (CLASPs, clathrin-associated sorting proteins) and recruiting the GPRCs to the adapter protein 2 complex 2 (AP-2) in clathrin-coated pits (CCPs). However, the extent of beta-arrestin involvement appears to vary significantly depending on the receptor, agonist and cell type. Internalized arrestin-receptor complexes traffic to intracellular endosomes, where they remain uncoupled from G-proteins. Two different modes of arrestin-mediated internalization occur. Class A receptors, like ADRB2, OPRM1, ENDRA, D1AR and ADRA1B dissociate from beta-arrestin at or near the plasma membrane and undergo rapid recycling. Class B receptors, like AVPR2, AGTR1, NTSR1, TRHR and TACR1 internalize as a complex with arrestin and traffic with it to endosomal vesicles, presumably as desensitized receptors, for extended periods of time. Receptor resensitization then requires that receptor-bound arrestin is removed so that the receptor can be dephosphorylated and returned to the plasma membrane. Mediates endocytosis of CCR7 following ligation of CCL19 but not CCL21. Involved in internalization of P2RY1, P2RY4, P2RY6 and P2RY11 and ATP-stimulated internalization of P2RY2. Involved in phosphorylation-dependent internalization of OPRD1 and subsequent recycling or degradation. Involved in ubiquitination of IGF1R. Beta-arrestins function as multivalent adapter proteins that can switch the GPCR from a G-protein signaling mode that transmits short-lived signals from the plasma membrane via small molecule second messengers and ion channels to a beta-arrestin signaling mode that transmits a distinct set of signals that are initiated as the receptor internalizes and transits the intracellular compartment. Acts as a signaling scaffold for MAPK pathways such as MAPK1/3 (ERK1/2) and MAPK10 (JNK3). ERK1/2 and JNK3 activated by the beta-arrestin scaffold are largely excluded from the nucleus and confined to cytoplasmic locations such as endocytic vesicles, also called beta-arrestin signalosomes. Acts as a signaling scaffold for the AKT1 pathway. GPCRs for which the beta-arrestin-mediated signaling relies on both ARRB1 and ARRB2 (codependent regulation) include ADRB2, F2RL1 and PTH1R. For some GPCRs the beta-arrestin-mediated signaling relies on either ARRB1 or ARRB2 and is inhibited by the other respective beta-arrestin form (reciprocal regulation). Increases ERK1/2 signaling in AGTR1- and AVPR2-mediated activation (reciprocal regulation). Involved in CCR7-mediated ERK1/2 signaling involving ligand CCL19. Is involved in type-1A angiotensin II receptor/AGTR1-mediated ERK activity. Is involved in type-1A angiotensin II receptor/AGTR1-mediated MAPK10 activity. Is involved in dopamine-stimulated AKT1 activity in the striatum by disrupting the association of AKT1 with its negative regulator PP2A. Involved in AGTR1-mediated chemotaxis. Appears to function as signaling scaffold involved in regulation of MIP-1-beta-stimulated CCR5-dependent chemotaxis. Involved in attenuation of NF-kappa-B-dependent transcription in response to GPCR or cytokine stimulation by interacting with and stabilizing CHUK. Suppresses UV-induced NF-kappa-B-dependent activation by interacting with CHUK. The function is promoted by stimulation of ADRB2 and dephosphorylation of ARRB2. Involved in IL8-mediated granule release in neutrophils. Involved in p53/TP53-mediated apoptosis by regulating MDM2 and reducing the MDM2-mediated degradation of p53/TP53. May serve as nuclear messenger for GPCRs. Upon stimulation of OR1D2, may be involved in regulation of gene expression during the early processes of fertilization. Also involved in regulation of receptors other than GPCRs. Involved in endocytosis of TGFBR2 and TGFBR3 and down-regulates TGF-beta signaling such as NF-kappa-B activation. Involved in endocytosis of low-density lipoprotein receptor/LDLR. Involved in endocytosis of smoothened homolog/Smo, which also requires GRK2. Involved in endocytosis of SLC9A5. Involved in endocytosis of ENG and subsequent TGF-beta-mediated ERK activation and migration of epithelial cells. Involved in Toll-like receptor and IL-1 receptor signaling through the interaction with TRAF6 which prevents TRAF6 autoubiquitination and oligomerization required for activation of NF-kappa-B and JUN. Involved in insulin resistance by acting as insulin-induced signaling scaffold for SRC, AKT1 and INSR. Involved in regulation of inhibitory signaling of natural killer cells by recruiting PTPN6 and PTPN11 to KIR2DL1. Involved in the internalization of the atypical chemokine receptor ACKR3. Acts as an adapter protein coupling FFAR4 receptor to specific downstream signaling pathways, as well as mediating receptor endocytosis. During the activation step of NLRP3 inflammasome, directly associates with NLRP3 leading to inhibition of pro-inflammatory cytokine release and inhibition of inflammation. This chain is Beta-arrestin-2 (Arrb2), found in Rattus norvegicus (Rat).